Consider the following 497-residue polypeptide: Histidine--tRNA ligase (497 aa).

This sequence belongs to the class-II aminoacyl-tRNA synthetase family. In terms of assembly, homodimer.

It is found in the cytoplasm. It carries out the reaction tRNA(His) + L-histidine + ATP = L-histidyl-tRNA(His) + AMP + diphosphate + H(+). This chain is Histidine--tRNA ligase, found in Dinoroseobacter shibae (strain DSM 16493 / NCIMB 14021 / DFL 12).